The sequence spans 141 residues: Large ribosomal subunit protein uL11 (141 aa).

It belongs to the universal ribosomal protein uL11 family. As to quaternary structure, part of the ribosomal stalk of the 50S ribosomal subunit. Interacts with L10 and the large rRNA to form the base of the stalk. L10 forms an elongated spine to which L12 dimers bind in a sequential fashion forming a multimeric L10(L12)X complex. Post-translationally, one or more lysine residues are methylated.

In terms of biological role, forms part of the ribosomal stalk which helps the ribosome interact with GTP-bound translation factors. The protein is Large ribosomal subunit protein uL11 of Ruegeria sp. (strain TM1040) (Silicibacter sp.).